The following is a 265-amino-acid chain: Beta-lactamase OXA-48 (265 aa).

An N-terminal signal peptide occupies residues 1-22 (MRVLALSAVFLVASIIGMPAVA). The active-site Acyl-ester intermediate is the Ser70. Residues Ser70, Lys73, Ser118, and Arg250 each coordinate a beta-lactam. The residue at position 73 (Lys73) is an N6-carboxylysine.

It belongs to the class-D beta-lactamase family. As to quaternary structure, monomer. Dimer. In terms of processing, carboxylated on the epsilon-amino group of a lysine, with the resulting carbamate functional group serving as a general base. Probably N-carboxylated at Lys-73 at neutral pH in vivo and undergoes complete N-decarboxylation, at pH 4.1, in vitro.

The enzyme catalyses a beta-lactam + H2O = a substituted beta-amino acid. With respect to regulation, inhibited by avibactam, related diazabicyclooctane (DBO) derivatives and by bicyclic boronic acids, via a covalent binding to Ser-70. Inhibited by chloride, bromide and iodide ions. Not inhibited by the beta-lactamase-blocking agents, clavulanic acid or tazobactam. Its function is as follows. Class D beta-lactamase which confers resistance to the beta-lactam antibiotics, including amoxicillin, and moderate resistance to cephalosporins and carbapenems such as cephalothin and imipenem; in the DH10B strain of E.coli. Acts via hydrolysis of the beta-lactam ring. Has oxacillin-, cephalothin- and imipenem-hydrolyzing activities. The chain is Beta-lactamase OXA-48 from Klebsiella pneumoniae.